A 310-amino-acid chain; its full sequence is 1-aminocyclopropane-1-carboxylate oxidase 1 (310 aa).

Positions 113-133 (EELSKTMDEYVCQLHKFAERL) form a coiled coil. The Fe2OG dioxygenase domain maps to 158-259 (PAFGTKVAKY…RLSIATFYNP (102 aa)). Fe cation-binding residues include His182, Asp184, and His240. Arg250 provides a ligand contact to 2-oxoglutarate.

This sequence belongs to the iron/ascorbate-dependent oxidoreductase family. Requires Fe(2+) as cofactor.

The catalysed reaction is 1-aminocyclopropane-1-carboxylate + L-ascorbate + O2 = ethene + L-dehydroascorbate + hydrogen cyanide + CO2 + 2 H2O. The protein operates within alkene biosynthesis; ethylene biosynthesis via S-adenosyl-L-methionine; ethylene from S-adenosyl-L-methionine: step 2/2. Enzyme involved in the ethylene biosynthesis. May promote stem elongation by maximizing the extensibility cells, possibly by activating ethylene biosynthesis, in response to very-long-chain fatty acids (VLCFAs C20:0 to C30:0). This chain is 1-aminocyclopropane-1-carboxylate oxidase 1 (ACO1), found in Arabidopsis thaliana (Mouse-ear cress).